We begin with the raw amino-acid sequence, 128 residues long: Insulin-like 3 (128 aa).

An N-terminal signal peptide occupies residues 1–15; the sequence is MHALLLLLLLALGSA. 3 disulfide bridges follow: Cys-29–Cys-113, Cys-41–Cys-126, and Cys-112–Cys-117. Residues 81–94 show a composition bias toward low complexity; sequence ALDPDPALDPQLPH. Residues 81–101 are disordered; it reads ALDPDPALDPQLPHQASQRQR.

Belongs to the insulin family. Heterodimer of a B chain and an A chain linked by two disulfide bonds. As to expression, expressed in Leydig cells of the testis, and weakly in the theca interna cells of antral follicles and the corpus luteum of the ovary.

It localises to the secreted. In terms of biological role, seems to play a role in testicular function. May be a trophic hormone with a role in testicular descent in fetal life. Is a ligand for LGR8 receptor. The sequence is that of Insulin-like 3 (Insl3) from Rattus norvegicus (Rat).